Reading from the N-terminus, the 117-residue chain is Eukaryotic translation initiation factor 4E-binding protein (117 aa).

Residues threonine 37 and threonine 46 each carry the phosphothreonine modification. A YXXXXLphi motif; atypical motif is present at residues 54 to 60; the sequence is YERAFMK. Serine 65 carries the phosphoserine modification. At threonine 70 the chain carries Phosphothreonine.

The protein belongs to the eIF4E-binding protein family. Hypophosphorylated Thor/4E-BP competes with eIF4G1 to interact with eIF4E1; insulin stimulated Akt1 or Tor phosphorylation of Thor/4E-BP causes dissociation of the complex allowing eIF4G1 to bind and consequent initiation of translation. Post-translationally, phosphorylation at Thr-37, Thr-46, Ser-65 and Thr-70, corresponding to the hyperphosphorylated form, impairs its ability to prevent the interaction between eIF4G1 and eIF4E1, without affecting its interaction with free eIF4E1. Phosphorylated in rtesponse to insulin. Phosphorylation at Thr-46 is regulated by Tor and constitutes the major phosphorylation event that regulates activity. As to expression, widely expressed.

Functionally, repressor of translation initiation that regulates eIF4E1 activity by preventing its assembly into the eIF4F complex. Hypophosphorylated form competes with eIF4G1 and strongly binds to eIF4E1, leading to repress translation. In contrast, hyperphosphorylated form dissociates from eIF4E1, allowing interaction between eIF4G1 and eIF4E1, leading to initiation of translation. Acts as a regulator of various biological processes, such as innate immunity, cell growth or synaptic transmission. Acts downstream of phosphoinositide-3-kinase (PI3K) to regulate cell growth. Extends lifespan upon dietary restriction by regulating the mitochondrial translation. Acts as a regulator of lifespan in response to cold by regulating the mitochondrial translation. Acts as a negative regulator of presynaptic release of neurotransmitter in motor neurons: Thor expression is induced in response to insulin signaling, leading to prevent of translation of complexin (cpx), a protein known to regulate the exocytosis of synaptic vesicles. Acts as a negative regulator of synaptic strength at the neuromuscular junction: Thor expression in response to acute fasting prevents translation, thereby suppressing retrograde synaptic enhancement. The protein is Eukaryotic translation initiation factor 4E-binding protein of Drosophila melanogaster (Fruit fly).